Reading from the N-terminus, the 256-residue chain is MDISYHEKISKTYELIKKSTYSVAFTGAGISTESGIPDFRSPNGLWQRFRIVTYQEFIIDRKARNEFWKMKRELIQEIINAKPNNAHNALAELEKRGLLKYVITQNIDGLHQMAGNKSVIELHGNQRGYICLDCEKVYPLEEVLKMLKEQELDLRCEVCGGIIKPTIVFFGEPMPEKELLMAQQIANKCDIMFVIGTSLQVEPAASIPRIAYQNGAKLIFINKVQTEWDWIAEIIFYDSAGKVLKDILDVIKSEKF.

The region spanning 1–254 (MDISYHEKIS…KDILDVIKSE (254 aa)) is the Deacetylase sirtuin-type domain. Ala-28, Thr-32, Phe-39, Arg-40, Gln-105, Ile-107, Asp-108, and His-123 together coordinate NAD(+). A nicotinamide-binding site is contributed by Phe-39. Residues Ile-107 and Asp-108 each coordinate nicotinamide. Residue His-123 is the Proton acceptor of the active site. Zn(2+)-binding residues include Cys-131, Cys-134, Cys-156, and Cys-159. 3 residues coordinate NAD(+): Thr-197, Ser-198, and Asn-222.

It belongs to the sirtuin family. Class U subfamily. The cofactor is Zn(2+).

Its subcellular location is the cytoplasm. The catalysed reaction is N(6)-acetyl-L-lysyl-[protein] + NAD(+) + H2O = 2''-O-acetyl-ADP-D-ribose + nicotinamide + L-lysyl-[protein]. Functionally, NAD-dependent protein deacetylase which modulates the activities of several enzymes which are inactive in their acetylated form. The chain is NAD-dependent protein deacetylase from Thermodesulfovibrio yellowstonii (strain ATCC 51303 / DSM 11347 / YP87).